The sequence spans 164 residues: MVNSVVFFDITVDGKPLGRISIKLFADKILKTAENFRALSTGEKGFRYKGSCFHRIIPGFMCQGGDFTRHNGTGDKSIYGEKFDDENLIRKHTGSGILSMANAGPNTNGSQFFICAAKTEWLDGKHVAFGKVKERVNIVEAMEHFGYRNSKTSKKITIADCGQF.

The 157-residue stretch at phenylalanine 7 to glutamine 163 folds into the PPIase cyclophilin-type domain.

This sequence belongs to the cyclophilin-type PPIase family. PPIase A subfamily. As to expression, highly expressed in brain, ovary and mammary gland. Moderately expressed in lung, salivary gland, kidney, skin, adipose tissue, intestine and spleen. Weakly expressed in skeletal muscle, liver and stomach. Expressed in pleiomorphic and undifferentiated liposarcomas, osteosarcomas and breast carcinomas.

It localises to the cytoplasm. The enzyme catalyses [protein]-peptidylproline (omega=180) = [protein]-peptidylproline (omega=0). In terms of biological role, PPIases accelerate the folding of proteins. It catalyzes the cis-trans isomerization of proline imidic peptide bonds in oligopeptides. The protein is Peptidyl-prolyl cis-trans isomerase A-like 4A of Homo sapiens (Human).